Reading from the N-terminus, the 604-residue chain is Putative O-acetyltransferase SACOL0978 (604 aa).

The next 11 helical transmembrane spans lie at Tyr15–Leu35, Gly43–Leu63, Leu85–Ser105, Ala150–Ile170, Ile176–Ser196, Leu212–Asn232, Tyr240–Ile260, Ile267–Val287, Tyr310–Gly330, Ile332–Tyr352, and Phe377–Ala397. Catalysis depends on residues Ser459, Asp581, and His584.

The protein belongs to the acyltransferase 3 family.

Its subcellular location is the cell membrane. The chain is Putative O-acetyltransferase SACOL0978 from Staphylococcus aureus (strain COL).